A 91-amino-acid polypeptide reads, in one-letter code: Cell division protein FtsB (91 aa).

Topologically, residues 1–3 are cytoplasmic; the sequence is MKW. Residues 4 to 21 traverse the membrane as a helical segment; sequence LVAVLVVFVAMFQYRLWV. Residues 22 to 91 lie on the Periplasmic side of the membrane; that stretch reads GEGSIADVVR…ETFFMIIDDQ (70 aa). The stretch at 23-63 forms a coiled coil; it reads EGSIADVVRLEREIARQEADNERLRERNKQLAAEVDALKTG.

It belongs to the FtsB family. Part of a complex composed of FtsB, FtsL and FtsQ.

The protein localises to the cell inner membrane. Its function is as follows. Essential cell division protein. May link together the upstream cell division proteins, which are predominantly cytoplasmic, with the downstream cell division proteins, which are predominantly periplasmic. This chain is Cell division protein FtsB, found in Teredinibacter turnerae (strain ATCC 39867 / T7901).